The chain runs to 303 residues: Uridylate-specific endoribonuclease C (303 aa).

The signal sequence occupies residues 1–16 (MVYLVFLCLLPSLISG). The EndoU domain maps to 32-303 (TDAEIQSLAE…KRFVASSYPI (272 aa)). Active-site residues include histidine 181, histidine 196, and lysine 239. The N-linked (GlcNAc...) asparagine glycan is linked to asparagine 287.

It belongs to the ENDOU family. As to quaternary structure, monomer. It depends on Mn(2+) as a cofactor.

It localises to the secreted. The catalysed reaction is ribonucleotidyl-uridine-RNA = a 5'-end dephospho-uridine-RNA + a 3'-end 2',3'-cyclophospho-ribonucleotide-RNA. Its function is as follows. Endoribonuclease that cleaves single-stranded RNAs at 5' of uridylates and releases a product with a 2',3'-cyclic phosphate at the 3'-end. The sequence is that of Uridylate-specific endoribonuclease C (endou-c) from Xenopus laevis (African clawed frog).